Consider the following 466-residue polypeptide: Delta-1 crystallin (466 aa).

This sequence belongs to the lyase 1 family. Argininosuccinate lyase subfamily. As to quaternary structure, homotetramer. Eye lens.

Functionally, delta crystallin, the principal crystallin in embryonic lens, is found only in birds and reptiles. This Meleagris gallopavo (Wild turkey) protein is Delta-1 crystallin (ASL1).